The primary structure comprises 41 residues: Photosystem I reaction center subunit IX (41 aa).

Residues 7-27 (YLSTAPVVATGWFIVTAALLI) traverse the membrane as a helical segment.

The protein belongs to the PsaJ family.

Its subcellular location is the plastid. The protein localises to the chloroplast thylakoid membrane. Its function is as follows. May help in the organization of the PsaE and PsaF subunits. The polypeptide is Photosystem I reaction center subunit IX (Tetradesmus obliquus (Green alga)).